We begin with the raw amino-acid sequence, 130 residues long: UPF0225 protein CE1570 (130 aa).

This sequence belongs to the UPF0225 family.

The chain is UPF0225 protein CE1570 from Corynebacterium efficiens (strain DSM 44549 / YS-314 / AJ 12310 / JCM 11189 / NBRC 100395).